The sequence spans 411 residues: Inhibin beta B chain (411 aa).

The N-terminal stretch at 1 to 28 (MDGLPGRALGAACLLLLAAGWLGPEAWG) is a signal peptide. Positions 27-69 (WGSPTPPPSPAAPPPPPPPGAPGGSQDTCTSCGGGGGGFRRPE) are disordered. The propeptide occupies 29-296 (SPTPPPSPAA…GDSRHRIRKR (268 aa)). Residues 30–47 (PTPPPSPAAPPPPPPPGA) show a composition bias toward pro residues. Asn97 carries N-linked (GlcNAc...) asparagine glycosylation. 4 disulfide bridges follow: Cys300–Cys308, Cys307–Cys376, Cys336–Cys408, and Cys340–Cys410.

Belongs to the TGF-beta family. As to quaternary structure, dimeric, linked by one or more disulfide bonds. Inhibin B is a dimer of alpha and beta-B. Activin B is a homodimer of beta-B. Activin AB is a dimer of beta-A and beta-B. Interacts with FST and FSTL3. As to expression, alpha- and beta-B subunits are the predominant forms found in rat testis. Also expressed in ovary.

The protein localises to the secreted. Functionally, inhibins and activins inhibit and activate, respectively, the secretion of follitropin by the pituitary gland. Inhibins/activins are involved in regulating a number of diverse functions such as hypothalamic and pituitary hormone secretion, gonadal hormone secretion, germ cell development and maturation, erythroid differentiation, insulin secretion, nerve cell survival, embryonic axial development or bone growth, depending on their subunit composition. Inhibins appear to oppose the functions of activins. Activin B is a dimer of alpha and beta-B that plays a role in several essential biological processes including embryonic development, stem cell maintenance and differentiation, haematopoiesis, cell proliferation and wound healing. Signals through type I receptor ACVR1C, abundantly expressed in pancreatic beta cells, and type II receptors like ACVR2A. Upon ligand binding, these receptors phosphorylate intracellular signaling mediators SMAD2 and SMAD3, which form a complex with SMAD4, translocate to the nucleus, and regulate gene expression. Plays a crucial role in the induction of hepcidin by inflammation through activation of ACVR1C and subsequent phosphorylation of SMAD1/5/8. Regulates adipocyte lipid metabolism by decreasing non-esterified fatty acids and glycerol release and increases intracellular triglyceride content. Stimulates wound healing by promoting cell migration and hair follicle regeneration through the JNK and ERK signaling pathways downstream of RHOA. Its function is as follows. Inhibin B is a dimer of alpha and beta-B that plays a crucial role in the regulation of the reproductive system by inhibiting the secretion of follicle-stimulating hormone (FSH) from the anterior pituitary gland. Thereby, maintains reproductive homeostasis in both males and females. Acts as a more potent suppressor of FSH release than inhibin A. Functions as competitive receptor antagonist binding activin type II receptors with high affinity in the presence of the TGF-beta type III coreceptor/TGFBR3L. The sequence is that of Inhibin beta B chain (Inhbb) from Rattus norvegicus (Rat).